A 487-amino-acid chain; its full sequence is Bifunctional protein GlmU (487 aa).

A pyrophosphorylase region spans residues 1–235; the sequence is MSHSPTPLAA…PEEASGVNDR (235 aa). UDP-N-acetyl-alpha-D-glucosamine contacts are provided by residues 13–16, K27, Q82, 87–88, 110–112, G147, E162, N177, and N233; these read LAAG, GT, and SGD. Residue D112 coordinates Mg(2+). Residue N233 coordinates Mg(2+). The linker stretch occupies residues 236–256; the sequence is EELARAGRVLLRRRASELMRS. The segment at 257-487 is N-acetyltransferase; sequence GVTIEDPERF…ADSPRGGRAS (231 aa). UDP-N-acetyl-alpha-D-glucosamine contacts are provided by R339 and K357. H369 acts as the Proton acceptor in catalysis. Y372 and N383 together coordinate UDP-N-acetyl-alpha-D-glucosamine. Residues A386, 392 to 393, S411, A429, and R446 contribute to the acetyl-CoA site; that span reads NY. A disordered region spans residues 453–487; the sequence is EGWVARRKAEAQNKGAAEAAPAPSPADSPRGGRAS. Positions 468 to 481 are enriched in low complexity; the sequence is AAEAAPAPSPADSP.

It in the N-terminal section; belongs to the N-acetylglucosamine-1-phosphate uridyltransferase family. This sequence in the C-terminal section; belongs to the transferase hexapeptide repeat family. In terms of assembly, homotrimer. The cofactor is Mg(2+).

The protein localises to the cytoplasm. The catalysed reaction is alpha-D-glucosamine 1-phosphate + acetyl-CoA = N-acetyl-alpha-D-glucosamine 1-phosphate + CoA + H(+). It catalyses the reaction N-acetyl-alpha-D-glucosamine 1-phosphate + UTP + H(+) = UDP-N-acetyl-alpha-D-glucosamine + diphosphate. The protein operates within nucleotide-sugar biosynthesis; UDP-N-acetyl-alpha-D-glucosamine biosynthesis; N-acetyl-alpha-D-glucosamine 1-phosphate from alpha-D-glucosamine 6-phosphate (route II): step 2/2. It participates in nucleotide-sugar biosynthesis; UDP-N-acetyl-alpha-D-glucosamine biosynthesis; UDP-N-acetyl-alpha-D-glucosamine from N-acetyl-alpha-D-glucosamine 1-phosphate: step 1/1. It functions in the pathway bacterial outer membrane biogenesis; LPS lipid A biosynthesis. In terms of biological role, catalyzes the last two sequential reactions in the de novo biosynthetic pathway for UDP-N-acetylglucosamine (UDP-GlcNAc). The C-terminal domain catalyzes the transfer of acetyl group from acetyl coenzyme A to glucosamine-1-phosphate (GlcN-1-P) to produce N-acetylglucosamine-1-phosphate (GlcNAc-1-P), which is converted into UDP-GlcNAc by the transfer of uridine 5-monophosphate (from uridine 5-triphosphate), a reaction catalyzed by the N-terminal domain. The protein is Bifunctional protein GlmU of Anaeromyxobacter sp. (strain Fw109-5).